The chain runs to 554 residues: MFTSSSPEQRKPRQSRQLPGAACEECRRKKLRCDRQQPQCGGSSLERRLEQQMQTALLPGDDILNMLDEPAFTVFPSSEDQLGLPAFNITNSTRGEQCQDEQFLDHFADMKGSEFTGTLTTTSIPELMRADLTLRADYRRGNGRDQLYFDRVHIFTPIIHQRRYLSWSKDAHKNEARVCLQYAMWALAASFSAPFQHLRDALYRDARRMLDLLELSDGAMATHHLEQAQAWILVAIYEFMRMNYQVGWMSAGRSFRLVQLMRLYGIDGANSPTQELPQTSSMEWIETEEKRRTFWMAYSLDRFISMRDGWPLTLNEQVVTTCLPAPEAAFQSGKPASGGFLSETITQEDTGALFSFTECIIIATVCGRSLSHGQKLEVERVYGDVSPDFWQRHQWLDAIVKKRIEILSLRCASATEVVDPLLLFTYMMAQTTVLYLCKLVKSVTWETDKSNPIVQEYEQRSLAAAQEIVNLTHTLKQFNFLKVHPFMPLPLYLCAEFLSMYRSLDASFDAQLQEVQNALRNLQAVNNLARTYLNLLQVKEREGSLRSSSEEIDL.

Residues 1-21 (MFTSSSPEQRKPRQSRQLPGA) form a disordered region. Positions 23–40 (CEECRRKKLRCDRQQPQC) form a DNA-binding region, zn(2)-C6 fungal-type.

Its subcellular location is the nucleus. Transcription factor; part of the gene cluster that mediates the biosynthesis of azaphilone pigments (MonAzPs), a complex mixture of compounds with a common azaphilone skeleton very widely used as food colorants. Positively regulates the expression of the azaphilone pigments (MonAzPs) gene cluster. The chain is Pigment biosynthesis transcriptional activator pigB from Monascus ruber (Mold).